The primary structure comprises 169 residues: S-ribosylhomocysteine lyase (169 aa).

Histidine 54, histidine 58, and cysteine 128 together coordinate Fe cation.

Belongs to the LuxS family. In terms of assembly, homodimer. Fe cation is required as a cofactor.

The catalysed reaction is S-(5-deoxy-D-ribos-5-yl)-L-homocysteine = (S)-4,5-dihydroxypentane-2,3-dione + L-homocysteine. Involved in the synthesis of autoinducer 2 (AI-2) which is secreted by bacteria and is used to communicate both the cell density and the metabolic potential of the environment. The regulation of gene expression in response to changes in cell density is called quorum sensing. Catalyzes the transformation of S-ribosylhomocysteine (RHC) to homocysteine (HC) and 4,5-dihydroxy-2,3-pentadione (DPD). The protein is S-ribosylhomocysteine lyase of Shewanella oneidensis (strain ATCC 700550 / JCM 31522 / CIP 106686 / LMG 19005 / NCIMB 14063 / MR-1).